A 504-amino-acid chain; its full sequence is Aspartyl/glutamyl-tRNA(Asn/Gln) amidotransferase subunit B (504 aa).

The protein belongs to the GatB/GatE family. GatB subfamily. Heterotrimer of A, B and C subunits.

The enzyme catalyses L-glutamyl-tRNA(Gln) + L-glutamine + ATP + H2O = L-glutaminyl-tRNA(Gln) + L-glutamate + ADP + phosphate + H(+). The catalysed reaction is L-aspartyl-tRNA(Asn) + L-glutamine + ATP + H2O = L-asparaginyl-tRNA(Asn) + L-glutamate + ADP + phosphate + 2 H(+). Its function is as follows. Allows the formation of correctly charged Asn-tRNA(Asn) or Gln-tRNA(Gln) through the transamidation of misacylated Asp-tRNA(Asn) or Glu-tRNA(Gln) in organisms which lack either or both of asparaginyl-tRNA or glutaminyl-tRNA synthetases. The reaction takes place in the presence of glutamine and ATP through an activated phospho-Asp-tRNA(Asn) or phospho-Glu-tRNA(Gln). This Tropheryma whipplei (strain TW08/27) (Whipple's bacillus) protein is Aspartyl/glutamyl-tRNA(Asn/Gln) amidotransferase subunit B.